We begin with the raw amino-acid sequence, 183 residues long: MGQQNSKLTKSDIEFIGKNSNFSKEEVANIYGEFKKFDKDGNGSFDRKEFVLFFKSKLPNYPEDNLNKLFDAFDSDKSNTIDFKELTVALSIIGKGSAEDKLKVLFDIYDKDKSGILEKKEVDEMIALMKNVGVSLGKSPGDIELFIVKLFEKIDKDKNNLISREEFLTEGARSPSLLTLLGI.

G2 carries N-myristoyl glycine lipidation. EF-hand domains lie at 25–60, 61–96, 97–132, and 142–177; these read EEVA…KLPN, YPED…IGKG, SAED…MKNV, and DIEL…SPSL. Ca(2+)-binding residues include D74, D76, S78, T80, E85, D110, D112, S114, E121, D155, D157, N159, and E166.

This sequence belongs to the recoverin family.

The polypeptide is Calcium-binding protein M (cbpM) (Dictyostelium discoideum (Social amoeba)).